The following is a 458-amino-acid chain: MSDHSKALHVAVLAFPFGSHAAPLLALVCRLATSNPTVRFSFLSTAQSNTHTFPSTRTNEFDNVRPYNVWDGVPEGHQISGNPHVGTGFFLKALPHNFKAGMAKAEEESGATINCLLTDAFFWFAGDLAEEMGVPWVPYWTAGACSLSAHVNTDVIRITLGSTRTTQNTNQTLNFIPGLSAVHMNDLPGGVLHGDLESPFAQMLHKMGLNLPRATAVVLNSFEELEPAITTDLKLRLQKVLHVGPPSLSSSPTSSLDESGCLLWLDKHEAASVAYISFGTIITPPPNELLALAEALRASKIPFLWSLRDHSRPIFPEGFLENVLAFGKVVSWAPQSQVLAHPSIGVFVTHCGWNSILESITGGVPMICRPFFGDQTLNSRMVQDAWRIGVRLDGGVFTKSSMMSAVELIFSREEGKKLRENIILLKQKATDAVGASGSSTENFNVLLEVIKTCKHPKS.

The active-site Proton acceptor is His20. His20 contacts an anthocyanidin. Asp119 serves as the catalytic Charge relay. Thr141 lines the UDP-alpha-D-glucose pocket. An anthocyanidin is bound at residue His150. Residues Ala333, Gln335, His350, Trp353, Asn354, Ser355, and Glu358 each contribute to the UDP-alpha-D-glucose site. An an anthocyanidin-binding site is contributed by Gly373. Asp374 and Gln375 together coordinate UDP-alpha-D-glucose.

Belongs to the UDP-glycosyltransferase family. Expressed in ovaries.

It carries out the reaction a flavonol + UDP-alpha-D-glucose = a flavonol 3-O-beta-D-glucoside + UDP + H(+). It participates in flavonoid metabolism. Catalyzes the glucosylation of quercetin. Preferentially uses UDP-glucose as sugar donor, but is also able to use UDP-gal and UDP-xyl. Is probably not required for the accumulation of anthocyanin in red-fleshed kiwifruit varieties. In Actinidia chinensis var. chinensis (Chinese soft-hair kiwi), this protein is Flavonol 3-O-glucosyltransferase F3GT2.